The primary structure comprises 404 residues: MYEKTAEHFEQKYKNLPEGHLLVNLGPSHPATHGILQNVIQIDGERIVEAESVIGYVHRCFEKLGERYTYNQFLVCTDRMNYVSTPLNNIGWILAVEKMMQVEVPDRVTYVRMIISELSRIMDHIICLGILGVDLGAFSGMLHLFHHRENIYQIIEKLTGARLTTTFCRIGGLERDIYPEFEKEVKLVCKGLKPAIEEFNSLLLKNKIFLGRTEGIGGISAENAIAYGFSGPNLRAAGVDWDVRKDKPYMLYDKVDFDVPIGEDGSVLHRSLVRMEEMRQSIRIIEQLVDGIPSGAWHADLPHAYLPEKNKVYNNMEELIYHFKIIMHGVKVPPGEHYMATEAANGELGFYIVSEGEKSPWRVHVRRPCFWYYQSFAELVRGGLLADSVATMSSLNVIAGELDC.

The protein belongs to the complex I 49 kDa subunit family. In terms of assembly, NDH-1 is composed of 14 different subunits. Subunits NuoB, C, D, E, F, and G constitute the peripheral sector of the complex.

The protein resides in the cell inner membrane. It catalyses the reaction a quinone + NADH + 5 H(+)(in) = a quinol + NAD(+) + 4 H(+)(out). In terms of biological role, NDH-1 shuttles electrons from NADH, via FMN and iron-sulfur (Fe-S) centers, to quinones in the respiratory chain. The immediate electron acceptor for the enzyme in this species is believed to be ubiquinone. Couples the redox reaction to proton translocation (for every two electrons transferred, four hydrogen ions are translocated across the cytoplasmic membrane), and thus conserves the redox energy in a proton gradient. The polypeptide is NADH-quinone oxidoreductase subunit D (Leptospira borgpetersenii serovar Hardjo-bovis (strain JB197)).